A 369-amino-acid chain; its full sequence is Peptide chain release factor 1 (369 aa).

Residue glutamine 234 is modified to N5-methylglutamine.

Belongs to the prokaryotic/mitochondrial release factor family. Post-translationally, methylated by PrmC. Methylation increases the termination efficiency of RF1.

Its subcellular location is the cytoplasm. Peptide chain release factor 1 directs the termination of translation in response to the peptide chain termination codons UAG and UAA. The chain is Peptide chain release factor 1 from Kocuria rhizophila (strain ATCC 9341 / DSM 348 / NBRC 103217 / DC2201).